A 186-amino-acid chain; its full sequence is Ribosome-recycling factor (186 aa).

Belongs to the RRF family.

The protein localises to the cytoplasm. Functionally, responsible for the release of ribosomes from messenger RNA at the termination of protein biosynthesis. May increase the efficiency of translation by recycling ribosomes from one round of translation to another. The protein is Ribosome-recycling factor of Azorhizobium caulinodans (strain ATCC 43989 / DSM 5975 / JCM 20966 / LMG 6465 / NBRC 14845 / NCIMB 13405 / ORS 571).